Here is a 184-residue protein sequence, read N- to C-terminus: Transmembrane protein 140 (184 aa).

Residues 1–12 lie on the Cytoplasmic side of the membrane; sequence MAISRVWRNRLS. A helical transmembrane segment spans residues 13–33; that stretch reads FMAIMILVAMVLSLMSYALLW. Topologically, residues 34–83 are extracellular; it reads KAGNLTDVPNLRIGFYNFCLWKEDIGSLECYNFPELGVLGIPQVGLALAR. N-linked (GlcNAc...) asparagine glycosylation occurs at N37. Residues 84 to 104 form a helical membrane-spanning segment; it reads LGVYGALVLAVFVPLPLLLAQ. Residues 105-117 lie on the Cytoplasmic side of the membrane; that stretch reads CNSDEGEWRLAVG. Residues 118–138 form a helical membrane-spanning segment; sequence FLGASSVLLAGGLSLFLFLVW. The Extracellular portion of the chain corresponds to 139 to 149; it reads KWLRLSFLGPG. Residues 150 to 170 traverse the membrane as a helical segment; it reads FLSLCLAQALLIILLMAMVMF. At 171–184 the chain is on the cytoplasmic side; it reads PPRDKKDKNHWENC.

It localises to the membrane. In Rattus norvegicus (Rat), this protein is Transmembrane protein 140 (Tmem140).